The sequence spans 255 residues: Small ribosomal subunit protein eS1 (255 aa).

A2 carries the post-translational modification N-acetylalanine; partial.

It belongs to the eukaryotic ribosomal protein eS1 family. As to quaternary structure, component of the small ribosomal subunit. Mature ribosomes consist of a small (40S) and a large (60S) subunit. The 40S subunit contains about 33 different proteins and 1 molecule of RNA (18S). The 60S subunit contains about 49 different proteins and 3 molecules of RNA (25S, 5.8S and 5S).

It localises to the cytoplasm. The chain is Small ribosomal subunit protein eS1 from Arthroderma otae (strain ATCC MYA-4605 / CBS 113480) (Microsporum canis).